A 630-amino-acid polypeptide reads, in one-letter code: GTPase-activating protein NEL1 (630 aa).

This sequence belongs to the SEC23/SEC24 family. SEC23 subfamily.

The protein resides in the cytoplasm. It localises to the nucleus. Functionally, acts as a GTPase-activating protein (GAP) for SAR1. Contrary to its SEC23 homolog, NEL1 does not associate with SEC24 and its homologs, nor does it associate with the COPII components, suggesting that it is unlikely that NEL1 functions as a structural component of the vesicle coat machinery. May function as a signaling molecule. The polypeptide is GTPase-activating protein NEL1 (Saccharomyces cerevisiae (strain ATCC 204508 / S288c) (Baker's yeast)).